Consider the following 223-residue polypeptide: DNA mismatch repair protein MutH (223 aa).

The protein belongs to the MutH family.

It localises to the cytoplasm. Functionally, sequence-specific endonuclease that cleaves unmethylated GATC sequences. It is involved in DNA mismatch repair. In Haemophilus influenzae (strain PittGG), this protein is DNA mismatch repair protein MutH.